The following is a 498-amino-acid chain: Type VI secretion system sheath protein TssC1 (498 aa).

As to quaternary structure, forms a heterodimer with TssB1. Heterodimers assemble to form the sheath of the T6SS machinery. Interacts with TssA1.

Core component of the H1 type VI (H1-T6SS) secretion system that plays a role in the release of toxins targeting both eukaryotic and prokaryotic species. Forms the sheath of the structure by assembling into tubules together with TssB1 resulting in the stacking of cogwheel-like structures showing predominantly a 12-fold symmetry. The sheath contracts to provide the energy needed for effector delivery. The protein is Type VI secretion system sheath protein TssC1 of Pseudomonas aeruginosa (strain ATCC 15692 / DSM 22644 / CIP 104116 / JCM 14847 / LMG 12228 / 1C / PRS 101 / PAO1).